Here is a 339-residue protein sequence, read N- to C-terminus: Isopentenyl-diphosphate delta-isomerase (339 aa).

Substrate is bound at residue 7–8; sequence RK. FMN-binding positions include S65, 66-68, S96, and N125; that span reads SMT. 96–98 contributes to the substrate binding site; the sequence is SQR. Q160 contacts substrate. E161 provides a ligand contact to Mg(2+). FMN is bound by residues K192, T222, and 293–294; that span reads AG.

It belongs to the IPP isomerase type 2 family. In terms of assembly, homooctamer. Dimer of tetramers. FMN serves as cofactor. It depends on NADPH as a cofactor. Mg(2+) is required as a cofactor.

Its subcellular location is the cytoplasm. It carries out the reaction isopentenyl diphosphate = dimethylallyl diphosphate. Functionally, involved in the biosynthesis of isoprenoids. Catalyzes the 1,3-allylic rearrangement of the homoallylic substrate isopentenyl (IPP) to its allylic isomer, dimethylallyl diphosphate (DMAPP). This Vibrio campbellii (strain ATCC BAA-1116) protein is Isopentenyl-diphosphate delta-isomerase.